Consider the following 539-residue polypeptide: Serine/threonine-protein kinase BUR1 (539 aa).

Positions 1 to 15 are enriched in polar residues; it reads MEKLSETTPNGTSPR. The interval 1-27 is disordered; sequence MEKLSETTPNGTSPRTFALNHSRPRSS. The Protein kinase domain maps to 37–339; that stretch reads YELLGKLGEG…AVDALQHPWF (303 aa). Residues 43-51 and Lys-66 each bind ATP; that span reads LGEGTFGEV. Catalysis depends on Asp-169, which acts as the Proton acceptor. The interval 370-539 is disordered; sequence AALPPAPKGG…DRPDHNGYRR (170 aa). Basic and acidic residues-rich tracts occupy residues 414–428, 471–514, and 521–539; these read NGPD…RERG, NRDD…DRGT, and PRHD…GYRR.

Belongs to the protein kinase superfamily. CMGC Ser/Thr protein kinase family. CDC2/CDKX subfamily.

The protein localises to the nucleus. The catalysed reaction is L-seryl-[protein] + ATP = O-phospho-L-seryl-[protein] + ADP + H(+). The enzyme catalyses L-threonyl-[protein] + ATP = O-phospho-L-threonyl-[protein] + ADP + H(+). It catalyses the reaction [DNA-directed RNA polymerase] + ATP = phospho-[DNA-directed RNA polymerase] + ADP + H(+). Its function is as follows. Serine/threonine-protein kinase involved in transcription regulation. Phosphorylates the UBC2/RAD6 ubiquitin-conjugating enzyme (E2), leading to monoubiquitination of histone H2B and the silencing of telomeric-associated genes. Also required for histone H3 methylation. Necessary for the recovery from pheromone-induced growth arrest in the cell cycle G1 phase. The sequence is that of Serine/threonine-protein kinase BUR1 (BUR1) from Gibberella zeae (strain ATCC MYA-4620 / CBS 123657 / FGSC 9075 / NRRL 31084 / PH-1) (Wheat head blight fungus).